The following is a 62-amino-acid chain: Potassium channel toxin alpha-KTx 6.21 (62 aa).

The first 24 residues, 1-24 (MNAKLIYLLLVVTTMMLTFDTTQA), serve as a signal peptide directing secretion. 4 cysteine pairs are disulfide-bonded: C29–C50, C35–C55, C39–C57, and C45–C60. Valine amide is present on V61.

It belongs to the short scorpion toxin superfamily. Potassium channel inhibitor family. Alpha-KTx 06 subfamily. In terms of processing, C-terminal amidation is important for activity. There is a 50-70-fold decrease in ability to inhibit Kv1.2/KCNA2 when the toxin is not amidated. This decrease may be explained by a 23-fold slower association rate (k(on)) together with a 2-fold faster dissociation rate (k(off)). Expressed by the venom gland.

It is found in the secreted. Reversible blocker of voltage-gated potassium channels with fast binding and unbinding kinetics. Has highest activity on human voltage-gated potassium channel Kv1.2/KCNA2 channels (IC(50)=0.11-0.16 nM), whereas its affinity for other channels tested was in the nanomolar range (hKv1.1/KCNA1, IC(50)=253 nM; hKv1.3/KCNA3, IC(50)=91 nM; and hKCa3.1/KCNN4, IC(50)=70 nM). The protein is Potassium channel toxin alpha-KTx 6.21 of Urodacus yaschenkoi (Inland robust scorpion).